Consider the following 287-residue polypeptide: Probable endonuclease 4 (287 aa).

Positions 69, 109, 144, 178, 181, 215, 228, 230, and 260 each coordinate Zn(2+).

It belongs to the AP endonuclease 2 family. Zn(2+) serves as cofactor.

It catalyses the reaction Endonucleolytic cleavage to 5'-phosphooligonucleotide end-products.. In terms of biological role, endonuclease IV plays a role in DNA repair. It cleaves phosphodiester bonds at apurinic or apyrimidinic (AP) sites, generating a 3'-hydroxyl group and a 5'-terminal sugar phosphate. The sequence is that of Probable endonuclease 4 from Thermotoga maritima (strain ATCC 43589 / DSM 3109 / JCM 10099 / NBRC 100826 / MSB8).